We begin with the raw amino-acid sequence, 151 residues long: UPF0178 protein Spea_2958 (151 aa).

This sequence belongs to the UPF0178 family.

The protein is UPF0178 protein Spea_2958 of Shewanella pealeana (strain ATCC 700345 / ANG-SQ1).